The primary structure comprises 225 residues: MPAKRITDIDPLDRPREKIEKKGASALKDSELIAAILGKGTKNNDILTISSQVADLLKKDNLPSYDTLLRINGIGPTKAAVLMACFELANRYGTPAEKERIRITEPDHILKISEVTDLSGKSQEHFLVTTLNGASEVICTRTITMGLLNHSLVHPREVFADAITDRAAAIICIHNHPSGNPEPSSEDITVTRQLSEAGKILGISLLDHLIYTKGKVTSLRSLGYL.

In terms of domain architecture, MPN spans 102 to 225 (RITEPDHILK…VTSLRSLGYL (124 aa)). Positions 174, 176, and 187 each coordinate Zn(2+). The JAMM motif motif lies at 174-187 (HNHPSGNPEPSSED).

Belongs to the UPF0758 family.

The polypeptide is UPF0758 protein Mhun_2739 (Methanospirillum hungatei JF-1 (strain ATCC 27890 / DSM 864 / NBRC 100397 / JF-1)).